Reading from the N-terminus, the 602-residue chain is Sodium- and chloride-dependent GABA transporter 2 (602 aa).

Positions 1-13 (MDSRVSGTTSNGE) are enriched in polar residues. The interval 1–22 (MDSRVSGTTSNGETKPVYPVME) is disordered. Residues 1–40 (MDSRVSGTTSNGETKPVYPVMEKKEEDGTLERGHWNNKME) lie on the Cytoplasmic side of the membrane. Transmembrane regions (helical) follow at residues 41–61 (FVLS…FPYL), 68–88 (GAFF…VFLL), and 121–141 (IVIL…FYLF). The Extracellular portion of the chain corresponds to 142 to 206 (SSFTIDLPWG…GIQHLGALRW (65 aa)). Cys-153 and Cys-162 are joined by a disulfide. A glycan (N-linked (GlcNAc...) asparagine) is linked at Asn-173. 2 helical membrane passes run 207–227 (ELAL…WKGV) and 233–253 (VVYF…IRGV). Asn-269 carries an N-linked (GlcNAc...) asparagine glycan. 7 helical membrane-spanning segments follow: residues 282 to 302 (AGTQ…ALGS), 319 to 339 (FLNS…LGFM), 366 to 386 (VVML…VVLL), 418 to 438 (VLIL…LTEG), 453 to 473 (GMCL…VYGA), 490 to 510 (PLIK…TFLF), and 528 to 548 (WWGD…IPAW). Over 549 to 602 (SLYRLGTLKGPFRERIRQLMCPAEDLPQRNPAGPSAPATPRTSLLRLTELESHC) the chain is Cytoplasmic. Thr-587 bears the Phosphothreonine mark. The residue at position 591 (Ser-591) is a Phosphoserine.

It belongs to the sodium:neurotransmitter symporter (SNF) (TC 2.A.22) family. SLC6A13 subfamily. Expressed in brain, kidney, lung, liver and testis.

The protein resides in the cell membrane. Its subcellular location is the basolateral cell membrane. It catalyses the reaction 4-aminobutanoate(out) + chloride(out) + 2 Na(+)(out) = 4-aminobutanoate(in) + chloride(in) + 2 Na(+)(in). It carries out the reaction taurine(out) + chloride(out) + 2 Na(+)(out) = taurine(in) + chloride(in) + 2 Na(+)(in). The enzyme catalyses beta-alanine(out) + chloride(out) + 2 Na(+)(out) = beta-alanine(in) + chloride(in) + 2 Na(+)(in). The catalysed reaction is hypotaurine(out) + chloride(out) + 2 Na(+)(out) = hypotaurine(in) + chloride(in) + 2 Na(+)(in). GABA transport is inhibited by beta-alanine, 2,3-diaminopropionic acid and SNAP-5114. Its function is as follows. Mediates sodium- and chloride-dependent transport of gamma-aminobutyric acid (GABA). Mediates transport of beta-alanine. Can also mediate transport of taurine and hypotaurine. The sequence is that of Sodium- and chloride-dependent GABA transporter 2 (SLC6A13) from Homo sapiens (Human).